The chain runs to 515 residues: 2-isopropylmalate synthase (515 aa).

In terms of domain architecture, Pyruvate carboxyltransferase spans 5-267 (VIIFDTTLRD…HTNLKHDEIH (263 aa)). Residues Asp14, His202, His204, and Asn238 each coordinate Mn(2+). Residues 392–515 (KLNYLSVQSG…EIKQKKVETV (124 aa)) are regulatory domain.

It belongs to the alpha-IPM synthase/homocitrate synthase family. LeuA type 1 subfamily. Homodimer. It depends on Mn(2+) as a cofactor.

The protein localises to the cytoplasm. It catalyses the reaction 3-methyl-2-oxobutanoate + acetyl-CoA + H2O = (2S)-2-isopropylmalate + CoA + H(+). It functions in the pathway amino-acid biosynthesis; L-leucine biosynthesis; L-leucine from 3-methyl-2-oxobutanoate: step 1/4. Its function is as follows. Catalyzes the condensation of the acetyl group of acetyl-CoA with 3-methyl-2-oxobutanoate (2-ketoisovalerate) to form 3-carboxy-3-hydroxy-4-methylpentanoate (2-isopropylmalate). The protein is 2-isopropylmalate synthase of Aliivibrio fischeri (strain MJ11) (Vibrio fischeri).